Consider the following 581-residue polypeptide: Transmembrane anterior posterior transformation protein 1 homolog (581 aa).

The segment at 1–72 (MAGVSDAAAP…TLGFYESDRG (72 aa)) is disordered. Residues 11–23 (GSGGEGRRGGGGS) are compositionally biased toward gly residues. Over residues 46–55 (RPPPAGPGQP) the composition is skewed to pro residues. 5 helical membrane-spanning segments follow: residues 125-145 (LMFF…TLLP), 182-202 (ILVI…YHLI), 250-270 (IGVI…AILI), 417-437 (GFIP…SIKV), and 439-459 (GVLA…LKVL). The interval 484–563 (PVPSASAGKP…DSSELKHRSS (80 aa)) is disordered. Composition is skewed to polar residues over residues 500–522 (MFKS…NQPV) and 532–542 (LVTSNSDQFLT). Positions 549 to 563 (KDISQDSSELKHRSS) are enriched in basic and acidic residues.

This sequence belongs to the TAPT1 family.

Its subcellular location is the cytoplasm. It localises to the cytoskeleton. The protein resides in the microtubule organizing center. The protein localises to the centrosome. It is found in the cilium basal body. Its subcellular location is the membrane. In terms of biological role, plays a role in primary cilia formation. May act as a downstream effector of HOXC8 during development. May be involved in cartilage and bone development. May play a role in the differentiation of cranial neural crest cells. The protein is Transmembrane anterior posterior transformation protein 1 homolog (TAPT1) of Gallus gallus (Chicken).